The primary structure comprises 431 residues: Peptidase B (431 aa).

Residues K196 and D201 each contribute to the Mn(2+) site. Residue K208 is part of the active site. Residues D219, D278, and E280 each coordinate Mn(2+). R282 is an active-site residue.

Belongs to the peptidase M17 family. Homohexamer. Requires Mn(2+) as cofactor.

It is found in the cytoplasm. It carries out the reaction Release of an N-terminal amino acid, Xaa, from a peptide or arylamide. Xaa is preferably Glu or Asp but may be other amino acids, including Leu, Met, His, Cys and Gln.. Probably plays an important role in intracellular peptide degradation. The protein is Peptidase B of Vibrio atlanticus (strain LGP32) (Vibrio splendidus (strain Mel32)).